The primary structure comprises 358 residues: MFDFSIVTQWVHSLLTSFMPEELAVLIECIVIGVCIMLAYAVIAIIMIFMERKVCAAFQCRLGPMRVGPQGTIQVFADVFKMLIKEIITIRHADKFLYNLAPYIVILASIMAFSCLPINKGMEVLDFNVGIFFLLAASSIGVVGILLAGWSSNNKYSLIGAMRSGAQMISYELSVGLSILTIVILTDTMQLSEIVERQADGWFLFKGHIPALIAFIIYLIAGNAEVNRGPFDLPEAESELTAGYHTEYSGMHFGLFYVAEFVNLFIIAAVATTIFLGGWMPLHIPGLDGFNAIMDYIPGFIWFFGKSFFVVWLLMWIKWTFPRLRIDQILTLEWKYLVPIGLCNLLLMVIIVVFKLHF.

A run of 8 helical transmembrane segments spans residues 30 to 50, 96 to 116, 129 to 149, 165 to 185, 201 to 221, 264 to 284, 297 to 317, and 336 to 356; these read IVIG…MIFM, FLYN…FSCL, VGIF…LLAG, GAQM…IVIL, GWFL…YLIA, LFII…PLHI, IPGF…LMWI, and YLVP…VFKL.

The protein belongs to the complex I subunit 1 family. NDH-1 is composed of 14 different subunits. Subunits NuoA, H, J, K, L, M, N constitute the membrane sector of the complex.

The protein resides in the cell inner membrane. It carries out the reaction a quinone + NADH + 5 H(+)(in) = a quinol + NAD(+) + 4 H(+)(out). Its function is as follows. NDH-1 shuttles electrons from NADH, via FMN and iron-sulfur (Fe-S) centers, to quinones in the respiratory chain. The immediate electron acceptor for the enzyme in this species is believed to be ubiquinone. Couples the redox reaction to proton translocation (for every two electrons transferred, four hydrogen ions are translocated across the cytoplasmic membrane), and thus conserves the redox energy in a proton gradient. This subunit may bind ubiquinone. The protein is NADH-quinone oxidoreductase subunit H of Phocaeicola vulgatus (strain ATCC 8482 / DSM 1447 / JCM 5826 / CCUG 4940 / NBRC 14291 / NCTC 11154) (Bacteroides vulgatus).